The chain runs to 339 residues: Nicotinate-nucleotide--dimethylbenzimidazole phosphoribosyltransferase (339 aa).

Glu-306 acts as the Proton acceptor in catalysis.

This sequence belongs to the CobT family.

The catalysed reaction is 5,6-dimethylbenzimidazole + nicotinate beta-D-ribonucleotide = alpha-ribazole 5'-phosphate + nicotinate + H(+). The protein operates within nucleoside biosynthesis; alpha-ribazole biosynthesis; alpha-ribazole from 5,6-dimethylbenzimidazole: step 1/2. Functionally, catalyzes the synthesis of alpha-ribazole-5'-phosphate from nicotinate mononucleotide (NAMN) and 5,6-dimethylbenzimidazole (DMB). The chain is Nicotinate-nucleotide--dimethylbenzimidazole phosphoribosyltransferase from Brucella abortus (strain S19).